The primary structure comprises 425 residues: Histidine--tRNA ligase (425 aa).

This sequence belongs to the class-II aminoacyl-tRNA synthetase family. In terms of assembly, homodimer.

It is found in the cytoplasm. The enzyme catalyses tRNA(His) + L-histidine + ATP = L-histidyl-tRNA(His) + AMP + diphosphate + H(+). The protein is Histidine--tRNA ligase of Erwinia tasmaniensis (strain DSM 17950 / CFBP 7177 / CIP 109463 / NCPPB 4357 / Et1/99).